Reading from the N-terminus, the 346-residue chain is tRNA N6-adenosine threonylcarbamoyltransferase (346 aa).

His117 and His121 together coordinate Fe cation. Residues 139–143 (QVSGG), Asp172, Gly185, Asp189, and Asn278 contribute to the substrate site. Residue Asp308 participates in Fe cation binding.

This sequence belongs to the KAE1 / TsaD family. Fe(2+) is required as a cofactor.

It is found in the cytoplasm. The enzyme catalyses L-threonylcarbamoyladenylate + adenosine(37) in tRNA = N(6)-L-threonylcarbamoyladenosine(37) in tRNA + AMP + H(+). Its function is as follows. Required for the formation of a threonylcarbamoyl group on adenosine at position 37 (t(6)A37) in tRNAs that read codons beginning with adenine. Is involved in the transfer of the threonylcarbamoyl moiety of threonylcarbamoyl-AMP (TC-AMP) to the N6 group of A37, together with TsaE and TsaB. TsaD likely plays a direct catalytic role in this reaction. This is tRNA N6-adenosine threonylcarbamoyltransferase from Lactobacillus delbrueckii subsp. bulgaricus (strain ATCC 11842 / DSM 20081 / BCRC 10696 / JCM 1002 / NBRC 13953 / NCIMB 11778 / NCTC 12712 / WDCM 00102 / Lb 14).